Reading from the N-terminus, the 649-residue chain is Acetyl-coenzyme A synthetase (649 aa).

Residues 190 to 193 and Thr310 each bind CoA; that span reads RGGR. ATP contacts are provided by residues 386 to 388, 410 to 415, Asp499, and Arg514; these read GEP and DTWWQT. Position 522 (Ser522) interacts with CoA. Arg525 serves as a coordination point for ATP. Mg(2+)-binding residues include Val536, His538, and Val541. Arg583 serves as a coordination point for CoA. Lys608 bears the N6-acetyllysine mark.

Belongs to the ATP-dependent AMP-binding enzyme family. It depends on Mg(2+) as a cofactor. Acetylated. Deacetylation by the SIR2-homolog deacetylase activates the enzyme.

It catalyses the reaction acetate + ATP + CoA = acetyl-CoA + AMP + diphosphate. Catalyzes the conversion of acetate into acetyl-CoA (AcCoA), an essential intermediate at the junction of anabolic and catabolic pathways. AcsA undergoes a two-step reaction. In the first half reaction, AcsA combines acetate with ATP to form acetyl-adenylate (AcAMP) intermediate. In the second half reaction, it can then transfer the acetyl group from AcAMP to the sulfhydryl group of CoA, forming the product AcCoA. The sequence is that of Acetyl-coenzyme A synthetase from Methylorubrum populi (strain ATCC BAA-705 / NCIMB 13946 / BJ001) (Methylobacterium populi).